Consider the following 392-residue polypeptide: tRNA (guanine(6)-N2)-methyltransferase (392 aa).

The 111-residue stretch at 73–183 (SAIPLLNHFS…DSELFVGVDT (111 aa)) folds into the THUMP domain. S-adenosyl-L-methionine contacts are provided by residues 199-203 (HPAHL), 230-232 (SGT), Glu275, 303-304 (DA), and Asn317.

The protein belongs to the methyltransferase superfamily.

The protein resides in the cytoplasm. It carries out the reaction guanosine(6) in tRNA + S-adenosyl-L-methionine = N(2)-methylguanosine(6) in tRNA + S-adenosyl-L-homocysteine + H(+). Its function is as follows. S-adenosyl-L-methionine-dependent methyltransferase that catalyzes the methylation of the guanosine nucleotide at position 6 (m2G6) in tRNA. This Archaeoglobus fulgidus (strain ATCC 49558 / DSM 4304 / JCM 9628 / NBRC 100126 / VC-16) protein is tRNA (guanine(6)-N2)-methyltransferase.